The chain runs to 451 residues: Threonylcarbamoyladenosine tRNA methylthiotransferase MtaB (451 aa).

The region spanning Ala2–Glu114 is the MTTase N-terminal domain. The [4Fe-4S] cluster site is built by Cys11, Cys47, Cys78, Cys153, Cys157, and Cys160. The 231-residue stretch at Phe139–Glu369 folds into the Radical SAM core domain. Positions Ser372–Arg437 constitute a TRAM domain.

This sequence belongs to the methylthiotransferase family. MtaB subfamily. [4Fe-4S] cluster serves as cofactor.

It localises to the cytoplasm. It catalyses the reaction N(6)-L-threonylcarbamoyladenosine(37) in tRNA + (sulfur carrier)-SH + AH2 + 2 S-adenosyl-L-methionine = 2-methylsulfanyl-N(6)-L-threonylcarbamoyladenosine(37) in tRNA + (sulfur carrier)-H + 5'-deoxyadenosine + L-methionine + A + S-adenosyl-L-homocysteine + 2 H(+). Catalyzes the methylthiolation of N6-threonylcarbamoyladenosine (t(6)A), leading to the formation of 2-methylthio-N6-threonylcarbamoyladenosine (ms(2)t(6)A) at position 37 in tRNAs that read codons beginning with adenine. This is Threonylcarbamoyladenosine tRNA methylthiotransferase MtaB (mtaB) from Bacillus subtilis (strain 168).